The chain runs to 249 residues: MTSIKTIKSRAPKDYLVFALDVPTVSEAAEYVHLLKNHVGMFKVGLELFVRGGRRIIDTIHDAGGGAKIFLDLKLYDIPETVYRTMNAIAAMGVDFATVHCSGQKDMLAAAQEGADGQVGVLGVTVLTSMSADDVRDAGYGPEYIENISRLVMKRAAAAAEWGFAGIVCSPLEVSAMKERFGKGFVAVTPGIRPAKGLVSRDDQSRISTPGQAIRNGADYLVVGRPIREPDDSAAAAAAICKEIEEALK.

Substrate contacts are provided by residues Asp21, Lys43, 72–81 (DLKLYDIPET), Thr128, Arg193, Gln204, Gly224, and Arg225. Residue Lys74 is the Proton donor of the active site.

This sequence belongs to the OMP decarboxylase family. Type 1 subfamily. Homodimer.

The enzyme catalyses orotidine 5'-phosphate + H(+) = UMP + CO2. It functions in the pathway pyrimidine metabolism; UMP biosynthesis via de novo pathway; UMP from orotate: step 2/2. Functionally, catalyzes the decarboxylation of orotidine 5'-monophosphate (OMP) to uridine 5'-monophosphate (UMP). This is Orotidine 5'-phosphate decarboxylase from Desulfosudis oleivorans (strain DSM 6200 / JCM 39069 / Hxd3) (Desulfococcus oleovorans).